Consider the following 101-residue polypeptide: Urease subunit beta (101 aa).

This sequence belongs to the urease beta subunit family. Heterotrimer of UreA (gamma), UreB (beta) and UreC (alpha) subunits. Three heterotrimers associate to form the active enzyme.

The protein resides in the cytoplasm. It carries out the reaction urea + 2 H2O + H(+) = hydrogencarbonate + 2 NH4(+). The protein operates within nitrogen metabolism; urea degradation; CO(2) and NH(3) from urea (urease route): step 1/1. The chain is Urease subunit beta from Paraburkholderia phytofirmans (strain DSM 17436 / LMG 22146 / PsJN) (Burkholderia phytofirmans).